Reading from the N-terminus, the 50-residue chain is Inducible serine protease inhibitor 1 (50 aa).

The tract at residues 1–27 (DLVXGTNFXKNNPXSTRVAANSXRSPS) is disordered. Positions 8 to 25 (FXKNNPXSTRVAANSXRS) are enriched in polar residues.

Its function is as follows. Inhibits trypsin and the toxin protease PR2 of M.anisopliae. Does not inhibit chymotrypsin, subtilisin Carlsberg, proteinase K, porcine pancreatic elastase and the toxin protease PR1 of M.anisopliae. The polypeptide is Inducible serine protease inhibitor 1 (Galleria mellonella (Greater wax moth)).